A 101-amino-acid chain; its full sequence is Protein S100-A4 (101 aa).

The residue at position 2 (Ala-2) is an N-acetylalanine. N6-acetyllysine is present on Lys-7. EF-hand domains lie at 12–47 (MVST…SFLG) and 50–85 (TDEA…IAMM). Positions 28 and 33 each coordinate Ca(2+). Lys-35 is subject to N6-acetyllysine. Positions 63, 65, 67, 69, and 74 each coordinate Ca(2+).

This sequence belongs to the S-100 family. As to quaternary structure, homodimer. Interacts with PPFIBP1 in a calcium-dependent mode. Interacts with PGLYRP1; this complex acts as a chemoattractant that promotes lymphocyte movement. Interacts with MYH9; this interaction increases cell motility. Interacts with Annexin 2/ANXA2. Interacts with TP53; this interaction promotes TP53 degradation. Interacts with CCR5. Interacts with FCGR3A; this interaction inhibits PKC-dependent phosphorylation of FCGR3A. As to expression, ubiquitously expressed.

It localises to the secreted. The protein localises to the nucleus. The protein resides in the cytoplasm. Functionally, calcium-binding protein that plays a role in various cellular processes including motility, angiogenesis, cell differentiation, apoptosis, and autophagy. Increases cell motility and invasiveness by interacting with non-muscle myosin heavy chain (NMMHC) IIA/MYH9. Mechanistically, promotes filament depolymerization and increases the amount of soluble myosin-IIA, resulting in the formation of stable protrusions facilitating chemotaxis. Also modulates the pro-apoptotic function of TP53 by binding to its C-terminal transactivation domain within the nucleus and reducing its protein levels. Within the extracellular space, stimulates cytokine production including granulocyte colony-stimulating factor and CCL24 from T-lymphocytes. In addition, stimulates T-lymphocyte chemotaxis by acting as a chemoattractant complex with PGLYRP1 that promotes lymphocyte migration via CCR5 and CXCR3 receptors. The polypeptide is Protein S100-A4 (S100A4) (Homo sapiens (Human)).